The sequence spans 258 residues: Deoxyribose-phosphate aldolase (258 aa).

The active-site Proton donor/acceptor is the Asp102. The active-site Schiff-base intermediate with acetaldehyde is Lys165. Catalysis depends on Lys199, which acts as the Proton donor/acceptor.

The protein belongs to the DeoC/FbaB aldolase family. DeoC type 2 subfamily.

Its subcellular location is the cytoplasm. The catalysed reaction is 2-deoxy-D-ribose 5-phosphate = D-glyceraldehyde 3-phosphate + acetaldehyde. Its pathway is carbohydrate degradation; 2-deoxy-D-ribose 1-phosphate degradation; D-glyceraldehyde 3-phosphate and acetaldehyde from 2-deoxy-alpha-D-ribose 1-phosphate: step 2/2. In terms of biological role, catalyzes a reversible aldol reaction between acetaldehyde and D-glyceraldehyde 3-phosphate to generate 2-deoxy-D-ribose 5-phosphate. The protein is Deoxyribose-phosphate aldolase of Aliivibrio fischeri (strain ATCC 700601 / ES114) (Vibrio fischeri).